A 178-amino-acid chain; its full sequence is Ribosome maturation factor RimM (178 aa).

A PRC barrel domain is found at 101-178 (ADEYYWYQLV…VMRVEWDADF (78 aa)).

Belongs to the RimM family. In terms of assembly, binds ribosomal protein uS19.

The protein localises to the cytoplasm. Its function is as follows. An accessory protein needed during the final step in the assembly of 30S ribosomal subunit, possibly for assembly of the head region. Essential for efficient processing of 16S rRNA. May be needed both before and after RbfA during the maturation of 16S rRNA. It has affinity for free ribosomal 30S subunits but not for 70S ribosomes. The sequence is that of Ribosome maturation factor RimM from Pseudomonas putida (strain ATCC 700007 / DSM 6899 / JCM 31910 / BCRC 17059 / LMG 24140 / F1).